The chain runs to 355 residues: Gentisate 1,2-dioxygenase (355 aa).

Residues 106-174 enclose the Cupin type-2 domain; sequence MQLLLPGEWA…GNEPVVWLDV (69 aa).

It belongs to the gentisate 1,2-dioxygenase family.

The catalysed reaction is 2,5-dihydroxybenzoate + O2 = 3-maleylpyruvate + H(+). Its pathway is aromatic compound metabolism; naphthalene degradation. Catalyzes the oxygen-dependent ring fission of gentisate between the carboxyl and proximal hydroxyl groups at positions 1 and 2 of the aromatic ring to form maleylpyruvate. Can also catalyze oxidation of alkyl- and halogenated gentisates. Exhibits higher affinity for 3-substituted gentisates than for gentisate but has higher activity with gentisate. The chain is Gentisate 1,2-dioxygenase from Ralstonia sp.